A 718-amino-acid polypeptide reads, in one-letter code: Protein Hook homolog 3 (718 aa).

Residue M1 is modified to N-acetylmethionine. The segment at 1-164 (MFSVESLERA…QELMSKESPV (164 aa)) is sufficient for interaction with microtubules. A phosphoserine mark is found at S3 and S6. A Calponin-homology (CH) domain is found at 10–126 (AELCESLLTW…RMLQLILGCA (117 aa)). Coiled coils occupy residues 167–433 (GNDA…VQAQ) and 462–667 (EIRE…YIVS). S238 carries the post-translational modification Phosphoserine. The segment at 553–718 (EKLHEANNEL…PGHVQPATAR (166 aa)) is required for association with Golgi. The interval 556–718 (HEANNELQKK…PGHVQPATAR (163 aa)) is required for interaction with MSR1. Positions 682–718 (EDRLASTGSGQSFLARQRQATSSRRSYPGHVQPATAR) are disordered. Phosphoserine is present on residues S693 and S707. A compositionally biased stretch (low complexity) spans 696 to 707 (ARQRQATSSRRS).

The protein belongs to the hook family. As to quaternary structure, self-associates. Component of the FTS/Hook/FHIP complex (FHF complex), composed of AKTIP/FTS, FHIP1B, and one or more members of the Hook family of proteins HOOK1, HOOK2, and HOOK3. May interact directly with AKTIP/FTS, HOOK1 and HOOK2. Associates with several subunits of the homotypic vesicular sorting complex (the HOPS complex) including VPS16 and VPS41; these interactions may be indirect. Interacts with MSR1, and this association is stimulated by ligand binding to MSR1. Interacts with microtubules. Part of a tripartite complex with dynein and dynactin, acts an adapter linking the dynein motor complex and dynactin. Interacts with dynein intermediate chain and dynactin (DCTN1). Interacts with CCDC181. Interacts with LRGUK. (Microbial infection) Interacts with Salmonella typhimurium spiC.

Its subcellular location is the cytoplasm. The protein resides in the cytoskeleton. It localises to the golgi apparatus. Acts as an adapter protein linking the dynein motor complex to various cargos and converts dynein from a non-processive to a highly processive motor in the presence of dynactin. Facilitates the interaction between dynein and dynactin and activates dynein processivity (the ability to move along a microtubule for a long distance without falling off the track). Predominantly recruits 2 dyneins, which increases both the force and speed of the microtubule motor. Component of the FTS/Hook/FHIP complex (FHF complex). The FHF complex may function to promote vesicle trafficking and/or fusion via the homotypic vesicular protein sorting complex (the HOPS complex). May regulate clearance of endocytosed receptors such as MSR1. Participates in defining the architecture and localization of the Golgi complex. FHF complex promotes the distribution of AP-4 complex to the perinuclear area of the cell. Functionally, (Microbial infection) May serve as a target for the spiC protein from Salmonella typhimurium, which inactivates it, leading to a strong alteration in cellular trafficking. This is Protein Hook homolog 3 from Homo sapiens (Human).